We begin with the raw amino-acid sequence, 179 residues long: Large ribosomal subunit protein uL5 (179 aa).

This sequence belongs to the universal ribosomal protein uL5 family. Part of the 50S ribosomal subunit; part of the 5S rRNA/L5/L18/L25 subcomplex. Contacts the 5S rRNA and the P site tRNA. Forms a bridge to the 30S subunit in the 70S ribosome.

In terms of biological role, this is one of the proteins that bind and probably mediate the attachment of the 5S RNA into the large ribosomal subunit, where it forms part of the central protuberance. In the 70S ribosome it contacts protein S13 of the 30S subunit (bridge B1b), connecting the 2 subunits; this bridge is implicated in subunit movement. Contacts the P site tRNA; the 5S rRNA and some of its associated proteins might help stabilize positioning of ribosome-bound tRNAs. This chain is Large ribosomal subunit protein uL5, found in Dichelobacter nodosus (strain VCS1703A).